Consider the following 207-residue polypeptide: Ribonuclease HII (207 aa).

Positions 1–207 constitute an RNase H type-2 domain; it reads MDVLGIDEAG…ATVEKMKNSQ (207 aa). Asp-7, Glu-8, and Asp-105 together coordinate a divalent metal cation.

It belongs to the RNase HII family. Mn(2+) is required as a cofactor. The cofactor is Mg(2+).

Its subcellular location is the cytoplasm. It carries out the reaction Endonucleolytic cleavage to 5'-phosphomonoester.. Its function is as follows. Endonuclease that specifically degrades the RNA of RNA-DNA hybrids. The protein is Ribonuclease HII of Methanobrevibacter smithii (strain ATCC 35061 / DSM 861 / OCM 144 / PS).